The primary structure comprises 244 residues: Ribonuclease HII (244 aa).

Positions 23-236 (KIILGLDEAG…SKKLLKEFEE (214 aa)) constitute an RNase H type-2 domain. Positions 29, 30, and 130 each coordinate a divalent metal cation.

It belongs to the RNase HII family. Mn(2+) serves as cofactor. Mg(2+) is required as a cofactor.

The protein resides in the cytoplasm. It carries out the reaction Endonucleolytic cleavage to 5'-phosphomonoester.. Its function is as follows. Endonuclease that specifically degrades the RNA of RNA-DNA hybrids. The polypeptide is Ribonuclease HII (Methanococcus vannielii (strain ATCC 35089 / DSM 1224 / JCM 13029 / OCM 148 / SB)).